The following is a 455-amino-acid chain: MKLNLFILGLLTLAAHAYALVARDKLLLPHEDPFFQPPDGWQDKEVGTILRSRKVTIKTLVKDNLKEAWQLLYRTTYTSDDEPTTTVTTVMVPHNAQNDSLVLFADFEDSSADRCAPSYSWRAGSLDDPSASTRVAIAMLYLQEGYIVTMPDKEGNRGAFGSGHVEGRQSLDGIRATLAFDKLGLSKDTRVAGHGYSGGGIQIGWAASLKKTYAPELNVVGWSAGGVPSNLTALIEKINGSPFAGFVVAGLTGVSSTYPEVKEYMEKVFTKQGLEDMEFPKKFCSTGIVLRFLFKDFFAKDFSKVGDRYLYEPVVRNILEKLTMGTNPDYTPDAPMLLMQAKNDEVAPYEAVKKTYDSWCQEGAQVHLVTLNNPLSSHASTTVTSSLPGFLWVRDRLQGKLAESGCHENKNFDVGINTNALGEDFKGILGILQGFLGDKIGPNDEYLIDWFKKHK.

The first 19 residues, 1-19, serve as a signal peptide directing secretion; the sequence is MKLNLFILGLLTLAAHAYA. N-linked (GlcNAc...) asparagine glycosylation occurs at asparagine 98. Residues cysteine 115 and cysteine 284 are joined by a disulfide bond. The Nucleophile role is filled by serine 197. A glycan (N-linked (GlcNAc...) asparagine) is linked at asparagine 230. Catalysis depends on residues aspartate 344 and histidine 378. Cysteine 360 and cysteine 406 are oxidised to a cystine.

It belongs to the AB hydrolase superfamily. Lipase family. Class Lip subfamily.

The protein localises to the secreted. Its subcellular location is the cell wall. The catalysed reaction is a triacylglycerol + H2O = a diacylglycerol + a fatty acid + H(+). The enzyme catalyses a monoacylglycerol + H2O = glycerol + a fatty acid + H(+). It carries out the reaction a diacylglycerol + H2O = a monoacylglycerol + a fatty acid + H(+). Functionally, secreted lipase involved in Dandruff and seborrheic dermatitis (D/SD) probably via lipase-mediated breakdown of sebaceous lipids and release of irritating free fatty acids. Has triacylglycerol lipase activity and is able to hydrolyze triolein. Mostly converts monoolein to di- and triolein, while free fatty acids are only produced in low amounts. In Malassezia globosa (strain ATCC MYA-4612 / CBS 7966) (Dandruff-associated fungus), this protein is Secreted triacylglycerol lipase LIP4.